A 308-amino-acid chain; its full sequence is Oxygen-dependent coproporphyrinogen-III oxidase (308 aa).

A substrate-binding site is contributed by serine 92. Positions 96 and 106 each coordinate a divalent metal cation. Histidine 106 functions as the Proton donor in the catalytic mechanism. Asparagine 108–arginine 110 lines the substrate pocket. A divalent metal cation is bound by residues histidine 145 and histidine 175. Positions tyrosine 240–glutamate 275 are important for dimerization. Glycine 258–arginine 260 is a binding site for substrate.

This sequence belongs to the aerobic coproporphyrinogen-III oxidase family. In terms of assembly, homodimer. A divalent metal cation is required as a cofactor.

It localises to the cytoplasm. The enzyme catalyses coproporphyrinogen III + O2 + 2 H(+) = protoporphyrinogen IX + 2 CO2 + 2 H2O. Its pathway is porphyrin-containing compound metabolism; protoporphyrin-IX biosynthesis; protoporphyrinogen-IX from coproporphyrinogen-III (O2 route): step 1/1. In terms of biological role, involved in the heme biosynthesis. Catalyzes the aerobic oxidative decarboxylation of propionate groups of rings A and B of coproporphyrinogen-III to yield the vinyl groups in protoporphyrinogen-IX. This Salmonella paratyphi A (strain ATCC 9150 / SARB42) protein is Oxygen-dependent coproporphyrinogen-III oxidase.